The following is a 206-amino-acid chain: MGKKIDNPESSAKVSDAEEEEEEYAVEKIIDRRVRKGKVEYYLKWKGYPETENTWEPENNLDCQDLIQQYEASRKDEEKSAASKKDRPSSSAKAKETQGRASSSTSTASKRKSEEPTAPSGNKSKRTTDAEQDTIPVSGSTGFDRGLEAEKILGASDNNGRLTFLIQFKGVDQAEMVPSSVANEKIPRMVIHFYEERLSWYSDNED.

2 disordered regions span residues 1-24 (MGKK…EEEY) and 47-145 (GYPE…GFDR). S11 and S15 each carry phosphoserine. The 59-residue stretch at 24–82 (YAVEKIIDRRVRKGKVEYYLKWKGYPETENTWEPENNLDCQDLIQQYEASRKDEEKSAA) folds into the Chromo 1 domain. Low complexity predominate over residues 50–60 (ETENTWEPENN). Residues 72 to 98 (ASRKDEEKSAASKKDRPSSSAKAKETQ) show a composition bias toward basic and acidic residues. Residues 95–206 (KETQGRASSS…RLSWYSDNED (112 aa)) form a binds to Su(var)39 region. Residues S102, S103, and S113 each carry the phosphoserine modification. T127, T128, and T134 each carry phosphothreonine. The region spanning 147–205 (LEAEKILGASDNNGRLTFLIQFKGVDQAEMVPSSVANEKIPRMVIHFYEERLSWYSDNE) is the Chromo 2 domain.

Homodimer. Probably associates with Su(var)3-9. Interacts with Mcm10. Interacts (via chromoshadow domain) with piwi (via N-terminal region). Interacts with Rrp6. Associates with and may be part of the HipHop-HOAP telomere capping complex but is not required for its stability or telomere localization. Interacts (via the chromo domain 2 (chromoshadow domain) and the hinge region between chromo domains 1 and 2) with cav/HOAP (via C-terminus); the interaction is direct. Each molecule of cav/HOAP interacts with 2 molecules of Su(var)205/HP1. Interacts with HipHop (via N-terminus). Interacts with moi/modigliani; the interaction is direct. Interacts (via chromo domain 1) with His3/histone 3 (via N-terminal tail methylated at 'Lys-10'); the interaction is direct. Salivary gland (at protein level).

Its subcellular location is the nucleus. It is found in the nucleoplasm. The protein localises to the chromosome. The protein resides in the telomere. Structural component of heterochromatin, involved in gene repression and the modification of position-effect-variegation. Recognizes and binds histone H3 tails methylated at 'Lys-9', leading to epigenetic repression. Stabilizes chromatin-associated RNAs probably by binding to them and thereby preventing their degradation. Associates with, and may be a part of, the HipHop-HOAP complex that recruits the MTV complex to form the terminin telomere-capping complex, which binds to chromosome ends in a sequence-independent manner and prevents telomere fusion. Telomere capping is independent of the origin recognition complex (ORC). In Drosophila melanogaster (Fruit fly), this protein is Heterochromatin protein 1.